The sequence spans 165 residues: Nucleotide-binding protein PMN2A_1813 (165 aa).

The protein belongs to the YajQ family.

Its function is as follows. Nucleotide-binding protein. The sequence is that of Nucleotide-binding protein PMN2A_1813 from Prochlorococcus marinus (strain NATL2A).